Here is a 425-residue protein sequence, read N- to C-terminus: Enolase (425 aa).

Q162 provides a ligand contact to (2R)-2-phosphoglycerate. The active-site Proton donor is the E204. Positions 241, 282, and 309 each coordinate Mg(2+). (2R)-2-phosphoglycerate is bound by residues K334, R363, S364, and K385. K334 functions as the Proton acceptor in the catalytic mechanism.

Belongs to the enolase family. Requires Mg(2+) as cofactor.

It localises to the cytoplasm. It is found in the secreted. The protein resides in the cell surface. It catalyses the reaction (2R)-2-phosphoglycerate = phosphoenolpyruvate + H2O. The protein operates within carbohydrate degradation; glycolysis; pyruvate from D-glyceraldehyde 3-phosphate: step 4/5. Functionally, catalyzes the reversible conversion of 2-phosphoglycerate (2-PG) into phosphoenolpyruvate (PEP). It is essential for the degradation of carbohydrates via glycolysis. The sequence is that of Enolase from Corynebacterium diphtheriae (strain ATCC 700971 / NCTC 13129 / Biotype gravis).